Reading from the N-terminus, the 983-residue chain is MDCHLSILVLLGCCVLSCSGELSPQPSNEVNLLDSKTIQGELGWISYPSHGWEEISGVDEHYTPIRTYQVCNVMDHSQNNWLRTNWVPRNSAQKIYVELKFTLRDCNSIPLVLGTCKETFNLYYMESDDHGVKFREHQFTKIDTIAADESFTQMDLGDRILKLNTEIREVGPVNKKGFYLAFQDVGACVALVSVRVYFKKCPFTVKNLAMFPDTVPMDSQSLVEVRGSCVNNSKEEDPPRMYCSTEGEWLVPIGKCTCNAGYEERGFICQACRPGFYKASDGAAKCAKCPPHSSTQEDGSMNCRCENNYFRAEKDPPSMACARPPSAPRNVISNINETSVILDWSWPLDTGGRKDITFNIICKKCGWNVRQCEPCSPNVRFLPRQLGLTNTTVTVTDLLAHTNYTFEIDAVNGVSELSSPPRQYAAVSITTNQAAPSPVMTIKKDRTSRNSISLSWQEPEHPNGIILDYEVKYYQKQEQETSYTILRARGTNVTISSLKPDTTYVFQIRARTAAGYGTNSRKFEFETSPDSFSISGENSHVVMIAISAAVAIIVLTVVTYVLVGRFCGYHKSKHSAEEKRLHFGNGHLKLPGLRTYVDPHTYEDPTQAVHEFAKELDATNISIDKVVGAGEFGEVCSGRLKLPSKKEISVAIKTLKVGYTEKQRRDFLGEASIMGQFDHPNIIRLEGVVTKSKPEMIVTEYMENGSLDSFLRKHDAQFTVIQLVGMLRGIASGMKYLSDMGYVHRDLAARNILINSNLVCKVSDFGLSRVLEDDPEAAYTTRGGKIPIRWTSPEAMSYRKFTSASDVWSYGIVLWEVMSYGERPYSQMSNQDVIKAVDERYRLPPPMDCPAALYQLMLDCWQKDRNNRPKFEQIVSILDKLIRNPGSLKIITSAAARPSNLLLDQSNVDIATFHTTGDWLNGMRTAHCKEIFTGVEYSSCDTIAKISTDDMKKVGVTVVGPQKKIISTIKALETQSKNGPVPV.

Positions 1-20 (MDCHLSILVLLGCCVLSCSG) are cleaved as a signal peptide. The Extracellular segment spans residues 21–540 (ELSPQPSNEV…SFSISGENSH (520 aa)). One can recognise an Eph LBD domain in the interval 29–206 (EVNLLDSKTI…YFKKCPFTVK (178 aa)). N231, N336, N390, N403, and N492 each carry an N-linked (GlcNAc...) asparagine glycan. Fibronectin type-III domains lie at 324–434 (PPSA…TNQA) and 435–530 (APSP…TSPD). The chain crosses the membrane as a helical span at residues 541 to 564 (VVMIAISAAVAIIVLTVVTYVLVG). Over 565–983 (RFCGYHKSKH…TQSKNGPVPV (419 aa)) the chain is Cytoplasmic. Phosphotyrosine; by autocatalysis occurs at positions 596 and 602. Residues 621–882 (ISIDKVVGAG…QIVSILDKLI (262 aa)) enclose the Protein kinase domain. Residues 628 to 633 (GAGEFG), K653, and 700 to 706 (EYMENGS) contribute to the ATP site. Y701 carries the post-translational modification Phosphotyrosine; by autocatalysis. D746 functions as the Proton acceptor in the catalytic mechanism. 750 to 751 (RN) is an ATP binding site. Position 779 is a phosphotyrosine; by autocatalysis (Y779). The SAM domain occupies 911 to 975 (ATFHTTGDWL…ISTIKALETQ (65 aa)). Y937 is subject to Phosphotyrosine. Residues 981-983 (VPV) carry the PDZ-binding motif.

The protein belongs to the protein kinase superfamily. Tyr protein kinase family. Ephrin receptor subfamily. Heterotetramer upon binding of the ligand. The heterotetramer is composed of an ephrin dimer and a receptor dimer. Oligomerization is probably required to induce biological responses. Forms a ternary EFNA5-EPHA3-ADAM10 complex mediating EFNA5 extracellular domain shedding by ADAM10 which regulates the EFNA5-EPHA3 complex internalization and function. Interacts (phosphorylated) with PTPN1; dephosphorylates EPHA3 and may regulate its trafficking and function. Interacts (phosphorylated) with CRK; mediates EFNA5-EPHA3 signaling through RHOA GTPase activation. Interacts with NCK1 (via SH2 domain); mediates EFNA5-EPHA3 signaling. In terms of processing, autophosphorylates upon activation by EFNA5. Phosphorylation on Tyr-602 mediates interaction with NCK1. Dephosphorylated by PTPN1. As to expression, greatest levels of expression occurring in the brain, also detected in testis. Expressed in myogenic progenitor cells.

Its subcellular location is the cell membrane. The protein resides in the secreted. The catalysed reaction is L-tyrosyl-[protein] + ATP = O-phospho-L-tyrosyl-[protein] + ADP + H(+). Its function is as follows. Receptor tyrosine kinase which binds promiscuously membrane-bound ephrin family ligands residing on adjacent cells, leading to contact-dependent bidirectional signaling into neighboring cells. The signaling pathway downstream of the receptor is referred to as forward signaling while the signaling pathway downstream of the ephrin ligand is referred to as reverse signaling. Highly promiscuous for ephrin-A ligands it binds preferentially EFNA5. Upon activation by EFNA5 regulates cell-cell adhesion, cytoskeletal organization and cell migration. Plays a role in cardiac cells migration and differentiation and regulates the formation of the atrioventricular canal and septum during development probably through activation by EFNA1. Involved in the retinotectal mapping of neurons. May also control the segregation but not the guidance of motor and sensory axons during neuromuscular circuit development. In Mus musculus (Mouse), this protein is Ephrin type-A receptor 3 (Epha3).